Consider the following 574-residue polypeptide: Arginine--tRNA ligase (574 aa).

The 'HIGH' region signature appears at 121 to 131 (PNIAKEMHIGH).

Belongs to the class-I aminoacyl-tRNA synthetase family. As to quaternary structure, monomer.

It is found in the cytoplasm. It carries out the reaction tRNA(Arg) + L-arginine + ATP = L-arginyl-tRNA(Arg) + AMP + diphosphate. The chain is Arginine--tRNA ligase from Buchnera aphidicola subsp. Acyrthosiphon pisum (strain 5A).